The chain runs to 233 residues: Ubiquinone biosynthesis O-methyltransferase (233 aa).

Residues R37, G56, D77, and M121 each contribute to the S-adenosyl-L-methionine site.

Belongs to the methyltransferase superfamily. UbiG/COQ3 family.

It catalyses the reaction a 3-demethylubiquinol + S-adenosyl-L-methionine = a ubiquinol + S-adenosyl-L-homocysteine + H(+). The catalysed reaction is a 3-(all-trans-polyprenyl)benzene-1,2-diol + S-adenosyl-L-methionine = a 2-methoxy-6-(all-trans-polyprenyl)phenol + S-adenosyl-L-homocysteine + H(+). It participates in cofactor biosynthesis; ubiquinone biosynthesis. In terms of biological role, O-methyltransferase that catalyzes the 2 O-methylation steps in the ubiquinone biosynthetic pathway. The protein is Ubiquinone biosynthesis O-methyltransferase of Azoarcus sp. (strain BH72).